We begin with the raw amino-acid sequence, 1883 residues long: Lysophospholipase NTE1 (1883 aa).

The Cytoplasmic segment spans residues 1 to 75 (MSQVPVASPA…LLRVVLASLN (75 aa)). The helical transmembrane segment at 76 to 96 (LIRILATFSTITVPSLVYAIL) threads the bilayer. The Lumenal segment spans residues 97–103 (HYSLTLQ). Residues 104-124 (LNFPSLALLFLTSLISAFIWL) form a helical membrane-spanning segment. At 125–1883 (RYRHLNKYER…AGISARRNSI (1759 aa)) the chain is on the cytoplasmic side. Disordered regions lie at residues 284-327 (HLAP…FNPP), 355-410 (ERLG…LYHA), 618-693 (SQRS…MVGP), 716-764 (SAQP…RKGS), 921-1069 (EEDR…ATNS), and 1084-1108 (LHQQ…GKRS). A compositionally biased stretch (polar residues) spans 311–327 (NNATAPTSPYSSAFNPP). A compositionally biased stretch (low complexity) spans 372-383 (ARTASSGTASAT). Residues 650 to 668 (PSLTTSSKQSNQKPTSSRI) show a composition bias toward polar residues. A nucleoside 3',5'-cyclic phosphate-binding positions include 863-1158 (AGHG…RRPI) and 1166-1285 (RLLS…IARR). Over residues 936–948 (TDASSGSSRQNRP) the composition is skewed to polar residues. Positions 964-974 (LLDERNLREAD) are enriched in basic and acidic residues. Composition is skewed to polar residues over residues 988 to 998 (ISSNGDGNSGS) and 1084 to 1100 (LHQQ…QSSQ). Positions 1544–1708 (LVLGGGGARG…VDNLPVTVML (165 aa)) constitute a PNPLA domain. The GXGXXG motif lies at 1548-1553 (GGGARG). A GXSXG motif is present at residues 1575 to 1579 (GTSIG). Ser1577 functions as the Nucleophile in the catalytic mechanism. The active-site Proton acceptor is the Asp1695. Positions 1695 to 1697 (DGG) match the DGA/G motif. The tract at residues 1852–1883 (DESGVGGGVRKIRKKRRRTRRKAGISARRNSI) is disordered. Basic residues predominate over residues 1861–1874 (RKIRKKRRRTRRKA).

It belongs to the NTE family.

The protein localises to the endoplasmic reticulum membrane. The enzyme catalyses a 1-acyl-sn-glycero-3-phosphocholine + H2O = sn-glycerol 3-phosphocholine + a fatty acid + H(+). With respect to regulation, inhibited by organophosphorus esters. Intracellular phospholipase B that catalyzes the double deacylation of phosphatidylcholine (PC) to glycerophosphocholine (GroPCho). Plays an important role in membrane lipid homeostasis. Responsible for the rapid PC turnover in response to inositol, elevated temperatures, or when choline is present in the growth medium. This chain is Lysophospholipase NTE1 (NTE1), found in Mycosarcoma maydis (Corn smut fungus).